The primary structure comprises 249 residues: ATP synthase subunit a 1 (249 aa).

6 helical membrane passes run 26-46, 84-104, 114-134, 143-163, 193-213, and 216-236; these read FTNV…FLYL, FFPF…LGLF, IIVT…YGFF, LFVP…IEII, FVVS…LPLI, and VAIT…FTVL.

Belongs to the ATPase A chain family. As to quaternary structure, F-type ATPases have 2 components, CF(1) - the catalytic core - and CF(0) - the membrane proton channel. CF(1) has five subunits: alpha(3), beta(3), gamma(1), delta(1), epsilon(1). CF(0) has three main subunits: a(1), b(2) and c(9-12). The alpha and beta chains form an alternating ring which encloses part of the gamma chain. CF(1) is attached to CF(0) by a central stalk formed by the gamma and epsilon chains, while a peripheral stalk is formed by the delta and b chains.

It localises to the cell inner membrane. Key component of the proton channel; it plays a direct role in the translocation of protons across the membrane. The chain is ATP synthase subunit a 1 from Brucella anthropi (strain ATCC 49188 / DSM 6882 / CCUG 24695 / JCM 21032 / LMG 3331 / NBRC 15819 / NCTC 12168 / Alc 37) (Ochrobactrum anthropi).